A 418-amino-acid chain; its full sequence is Type II methyltransferase M.MspI (418 aa).

The 300-residue stretch at 105–404 (FKFIDLFSGI…EQISLALKTV (300 aa)) folds into the SAM-dependent MTase C5-type domain. The active site involves Cys174.

This sequence belongs to the class I-like SAM-binding methyltransferase superfamily. C5-methyltransferase family.

The catalysed reaction is a 2'-deoxycytidine in DNA + S-adenosyl-L-methionine = a 5-methyl-2'-deoxycytidine in DNA + S-adenosyl-L-homocysteine + H(+). In terms of biological role, a methylase, recognizes the double-stranded sequence 5'-CCGG-3', methylates C-1 on both strands, and protects the DNA from cleavage by the MspI endonuclease. This is Type II methyltransferase M.MspI (mspIM) from Moraxella sp.